An 88-amino-acid polypeptide reads, in one-letter code: Synaptonemal complex central element protein 3 (88 aa).

The stretch at 7-75 (EERNYDNMLK…FVNCKEEMEK (69 aa)) forms a coiled coil.

As to quaternary structure, homodimer. Can form higher-order homooligomers. Interacts with SYCP1 (via tetrameric core); the interaction remodels SYCP1 homotetramers to 2:1 heterotrimers with SYCE3. SYCP1/SYCE3 heterotrimers form lattice assemblies as part of the mature synaptonemal complex via both lateral and head-to-head interactions. Interacts with the SYCE1-SIX6OS1 complex; the interaction recruits the SYCE1-SIX6OS1 complex to the central element of the synaptonemal complex. Interacts with the SYCE2-TEX12 complex; the interaction promotes fibrous assembly of SYCE2-TEX12 as part of the synaptonemal complex central element. Interacts with SYCE1. Interacts with SYCE2. Interacts with proteasome subunit PSMA8; to participate in meiosis progression during spermatogenesis. Interacts with SPO16.

It localises to the nucleus. Its subcellular location is the chromosome. Major component of the transverse central element of synaptonemal complexes (SCS), formed between homologous chromosomes during meiotic prophase. Required for the assembly of the central element of the synaptonemal complex during meiosis, via remodeling of SYCP1 lattice structures and promoting recruitment of SYCE2-TEX12 and SYCE1-SIX60S1 complexes. Required for chromosome loading of the central element-specific SCS proteins, and for initiating synapsis between homologous chromosomes. Chromosome loading appears to require SYCP1. Required for fertility and normal testis development. The sequence is that of Synaptonemal complex central element protein 3 from Homo sapiens (Human).